The chain runs to 378 residues: Putative F-box protein At4g17565 (378 aa).

Positions 16-63 (PKWSELCPDLLRSIFEQLSFTNLNRAKLVCRSWNSASRGCVPKRNQIP) constitute an F-box domain.

The sequence is that of Putative F-box protein At4g17565 from Arabidopsis thaliana (Mouse-ear cress).